Consider the following 157-residue polypeptide: S-ribosylhomocysteine lyase (157 aa).

Fe cation is bound by residues His-53, His-57, and Cys-124.

It belongs to the LuxS family. Homodimer. It depends on Fe cation as a cofactor.

It carries out the reaction S-(5-deoxy-D-ribos-5-yl)-L-homocysteine = (S)-4,5-dihydroxypentane-2,3-dione + L-homocysteine. Its function is as follows. Involved in the synthesis of autoinducer 2 (AI-2) which is secreted by bacteria and is used to communicate both the cell density and the metabolic potential of the environment. The regulation of gene expression in response to changes in cell density is called quorum sensing. Catalyzes the transformation of S-ribosylhomocysteine (RHC) to homocysteine (HC) and 4,5-dihydroxy-2,3-pentadione (DPD). In Borreliella afzelii (strain PKo) (Borrelia afzelii), this protein is S-ribosylhomocysteine lyase.